Reading from the N-terminus, the 360-residue chain is Phospho-N-acetylmuramoyl-pentapeptide-transferase (360 aa).

10 helical membrane passes run 21–41 (YITF…LWIG), 73–93 (TMGG…WADL), 98–118 (VWFV…DDYW), 132–152 (WKYF…YAVG), 168–188 (FMPQ…VGTS), 199–219 (GLAI…AWAT), 236–256 (AGEL…FLWY), 263–283 (VFMG…IAVL), 288–308 (LLLV…ILQV), and 338–358 (VIVC…VTLK).

Belongs to the glycosyltransferase 4 family. MraY subfamily. Requires Mg(2+) as cofactor.

The protein resides in the cell inner membrane. The catalysed reaction is UDP-N-acetyl-alpha-D-muramoyl-L-alanyl-gamma-D-glutamyl-meso-2,6-diaminopimeloyl-D-alanyl-D-alanine + di-trans,octa-cis-undecaprenyl phosphate = di-trans,octa-cis-undecaprenyl diphospho-N-acetyl-alpha-D-muramoyl-L-alanyl-D-glutamyl-meso-2,6-diaminopimeloyl-D-alanyl-D-alanine + UMP. The protein operates within cell wall biogenesis; peptidoglycan biosynthesis. Catalyzes the initial step of the lipid cycle reactions in the biosynthesis of the cell wall peptidoglycan: transfers peptidoglycan precursor phospho-MurNAc-pentapeptide from UDP-MurNAc-pentapeptide onto the lipid carrier undecaprenyl phosphate, yielding undecaprenyl-pyrophosphoryl-MurNAc-pentapeptide, known as lipid I. The sequence is that of Phospho-N-acetylmuramoyl-pentapeptide-transferase from Actinobacillus pleuropneumoniae serotype 7 (strain AP76).